A 485-amino-acid polypeptide reads, in one-letter code: Sodium-coupled neutral amino acid symporter 1 (485 aa).

Over 1-74 (MMHFKSGLEL…EYIPGTTSLG (74 aa)) the chain is Cytoplasmic. Residue serine 6 is modified to Phosphoserine. Residue threonine 11 is modified to Phosphothreonine. Serine 25, serine 28, serine 49, and serine 52 each carry phosphoserine. Phosphothreonine is present on threonine 54. Phosphoserine is present on serine 56. A helical transmembrane segment spans residues 75 to 97 (MSVFNLSNAIMGSGILGLAFALA). The Extracellular segment spans residues 98-112 (NTGILLFLILLTSVT). Residues 113–133 (LLSIYSINLLLICSKETGCMV) form a helical membrane-spanning segment. Residues 134–148 (YEKLGEQVFGTTGKL) lie on the Cytoplasmic side of the membrane. Residues 149–169 (VIFGATSLQNTGAMLSYLFIV) traverse the membrane as a helical segment. At 170–188 (KNELPSAIKSLMGEEETFS) the chain is on the extracellular side. Residues 189-211 (AWYVDGRVLVVMVTFGIILPLCL) traverse the membrane as a helical segment. The Cytoplasmic portion of the chain corresponds to 212-216 (LKNLG). Residues 217–237 (YLGYTSGFSLSCMVFFLIVVI) traverse the membrane as a helical segment. At 238 to 273 (YKKFQIPCMNGEQNSTVSANVTDACTPKYVTFNSKT) the chain is on the extracellular side. Cysteine 245 and cysteine 262 are disulfide-bonded. 2 N-linked (GlcNAc...) asparagine glycosylation sites follow: asparagine 251 and asparagine 257. The chain crosses the membrane as a helical span at residues 274–294 (VYALPTIAFAFVCHPSVLPIY). The Cytoplasmic portion of the chain corresponds to 295–310 (SELKDRSQKKMQMVSN). Residues 311–331 (ISFFAMFVMYFLTAIFGYLTF) form a helical membrane-spanning segment. The Extracellular portion of the chain corresponds to 332–348 (YEKVQSDLLHKYQSTGD). Residues 349–369 (ILILTVRLAVIVAVILTVPVL) traverse the membrane as a helical segment. Over 370 to 391 (FFTVRSSLFELAKKTKFHLCRH) the chain is Cytoplasmic. Residues 392 to 412 (VLVTIILLVIINLLVIFIPSM) form a helical membrane-spanning segment. The Extracellular portion of the chain corresponds to 413–414 (KD). Residues 415-435 (IFGVVGVTSANMLIFILPSSL) traverse the membrane as a helical segment. Residues 436-450 (YLKITNQDGDKNTQR) lie on the Cytoplasmic side of the membrane. The helical transmembrane segment at 451–471 (IWAALFLALGVLFSLISIPLV) threads the bilayer. Residues 472–485 (IYDWACSSSNGEGH) are Extracellular-facing.

It belongs to the amino acid/polyamine transporter 2 family. In terms of processing, N-glycosylation plays an important role in the L-glutamine transport. In terms of tissue distribution, specifically expressed in brain with the highest levels in cerebellum and thalamus (at protein level). Expressed in glutamatergic, GABAergic and a subset of dopaminergic neurons of the substantia nigra and cholinergic motoneurons (at protein level). Also expressed by ependymal cells lining the ventricle (at protein level). Expression is also detected in spinal cord, heart, colon and placenta.

The protein resides in the cell membrane. It catalyses the reaction L-glutamine(in) + Na(+)(in) = L-glutamine(out) + Na(+)(out). It carries out the reaction L-alanine(in) + Na(+)(in) = L-alanine(out) + Na(+)(out). The catalysed reaction is L-asparagine(in) + Na(+)(in) = L-asparagine(out) + Na(+)(out). The enzyme catalyses L-histidine(in) + Na(+)(in) = L-histidine(out) + Na(+)(out). It catalyses the reaction L-serine(in) + Na(+)(in) = L-serine(out) + Na(+)(out). It carries out the reaction L-cysteine(in) + Na(+)(in) = L-cysteine(out) + Na(+)(out). The catalysed reaction is L-methionine(in) + Na(+)(in) = L-methionine(out) + Na(+)(out). The enzyme catalyses glycine(in) + Na(+)(in) = glycine(out) + Na(+)(out). It catalyses the reaction L-threonine(in) + Na(+)(in) = L-threonine(out) + Na(+)(out). It carries out the reaction L-proline(in) + Na(+)(in) = L-proline(out) + Na(+)(out). With respect to regulation, inhibited by alpha-(methylamino)isobutyric acid (MeAIB). Inhibited by lithium, potassium, choline ions, N-methylglucamine. The pH dependence has an allosteric effect on the transport. Symporter that cotransports short-chain neutral amino acids and sodium ions from the extraccellular to the intracellular side of the cell membrane. The transport is elctrogenic, pH dependent and driven by the Na(+) electrochemical gradient. Participates in the astroglia-derived glutamine transport into GABAergic interneurons for neurotransmitter GABA de novo synthesis. May also contributes to amino acid transport in placental trophoblast. Regulates synaptic plasticity. The polypeptide is Sodium-coupled neutral amino acid symporter 1 (Rattus norvegicus (Rat)).